The sequence spans 60 residues: Mastoparan-VB2 (60 aa).

Residues 1–27 (MKNTILLLFTAFIFLMGFFGMSADALA) form the signal peptide. AXPX repeat units follow at residues 27-30 (ADPK), 31-34 (ADPL), 35-38 (AGPF), and 41-44 (ADPD). Residues 28–45 (DPKADPLAGPFPDADPDP) constitute a propeptide that is removed on maturation. Leucine 59 is subject to Leucine amide.

Belongs to the MCD family. Mastoparan subfamily. As to expression, expressed by the venom gland.

It is found in the secreted. The protein resides in the target cell membrane. Antimicrobial peptide. Shows activity against both Gram-positive and -negative bacteria, as well against fungi. Also promotes moderate mast cell degranulation. Does not show hemolytic activity on rabbit and human erythrocytes. Its mast cell degranulation activity may be related to the activation of G-protein coupled receptors in mast cells as well as interaction with other proteins located in cell endosomal membranes in the mast cells. In Vespa bicolor (Black shield wasp), this protein is Mastoparan-VB2.